A 342-amino-acid polypeptide reads, in one-letter code: MTETAELTAATDADVLAVAREQVLEQGVGLTQEQVLRVLQLPDDRLEELLALAHEVRMRWCGPEVEVEGIISLKTGGCPEDCHFCSQSGLFASPVRSAWLDIPSLVEAAKQTAKSGATEFCIVAAVRGPDERLLAQVAAGIEAIRNEVDIQIACSLGMLTQEQVDRLSAMGVHRYNHNLETAKSHFPNVVTTHSWEERWDTLKMVREAGMEVCCGGILGMGETLEQRAEFAANLAELEPDEVPLNFLNPRPGTPFGDLEVLPASDALRAVAAFRLALPRTMLRFAGGREITLGDLGAKQGILGGINAVIVGNYLTTLGRPAEADLELLDDLQMPIKALNSSL.

Residues 63 to 288 (PEVEVEGIIS…RTMLRFAGGR (226 aa)) enclose the Radical SAM core domain. Cys-78, Cys-82, and Cys-85 together coordinate [4Fe-4S] cluster. 4 residues coordinate [2Fe-2S] cluster: Cys-121, Cys-154, Cys-213, and Arg-283.

Belongs to the radical SAM superfamily. Biotin synthase family. Homodimer. [4Fe-4S] cluster serves as cofactor. The cofactor is [2Fe-2S] cluster.

It carries out the reaction (4R,5S)-dethiobiotin + (sulfur carrier)-SH + 2 reduced [2Fe-2S]-[ferredoxin] + 2 S-adenosyl-L-methionine = (sulfur carrier)-H + biotin + 2 5'-deoxyadenosine + 2 L-methionine + 2 oxidized [2Fe-2S]-[ferredoxin]. It participates in cofactor biosynthesis; biotin biosynthesis; biotin from 7,8-diaminononanoate: step 2/2. In terms of biological role, catalyzes the conversion of dethiobiotin (DTB) to biotin by the insertion of a sulfur atom into dethiobiotin via a radical-based mechanism. This chain is Biotin synthase, found in Mycobacteroides abscessus (strain ATCC 19977 / DSM 44196 / CCUG 20993 / CIP 104536 / JCM 13569 / NCTC 13031 / TMC 1543 / L948) (Mycobacterium abscessus).